A 283-amino-acid chain; its full sequence is ATP synthase gamma chain (283 aa).

Belongs to the ATPase gamma chain family. As to quaternary structure, F-type ATPases have 2 components, CF(1) - the catalytic core - and CF(0) - the membrane proton channel. CF(1) has five subunits: alpha(3), beta(3), gamma(1), delta(1), epsilon(1). CF(0) has three main subunits: a, b and c.

The protein resides in the cell membrane. Functionally, produces ATP from ADP in the presence of a proton gradient across the membrane. The gamma chain is believed to be important in regulating ATPase activity and the flow of protons through the CF(0) complex. The protein is ATP synthase gamma chain of Clostridium botulinum (strain Eklund 17B / Type B).